The following is a 199-amino-acid chain: NAD(P)H dehydrogenase (quinone) (199 aa).

Residues 4 to 190 (VLVLYYSAYG…AGARYQGRRV (187 aa)) form the Flavodoxin-like domain. Residues 10–15 (SAYGHI) and 78–80 (TRF) each bind FMN. Tyrosine 12 serves as a coordination point for NAD(+). Tryptophan 98 contributes to the substrate binding site. FMN contacts are provided by residues 113-119 (STATQHG) and histidine 134.

It belongs to the WrbA family. The cofactor is FMN.

It catalyses the reaction a quinone + NADH + H(+) = a quinol + NAD(+). The enzyme catalyses a quinone + NADPH + H(+) = a quinol + NADP(+). The protein is NAD(P)H dehydrogenase (quinone) of Methylocella silvestris (strain DSM 15510 / CIP 108128 / LMG 27833 / NCIMB 13906 / BL2).